The chain runs to 374 residues: 8-amino-7-oxononanoate synthase (374 aa).

Arg22 and Arg29 together coordinate substrate. 109 to 110 (GY) lines the pyridoxal 5'-phosphate pocket. Position 134 (His134) interacts with substrate. Residues Ser182, 207-210 (DDAH), and 227-230 (TLSK) contribute to the pyridoxal 5'-phosphate site. N6-(pyridoxal phosphate)lysine is present on Lys230. Thr339 lines the substrate pocket.

It belongs to the class-II pyridoxal-phosphate-dependent aminotransferase family. BioF subfamily. Homodimer. Pyridoxal 5'-phosphate is required as a cofactor.

It carries out the reaction 6-carboxyhexanoyl-[ACP] + L-alanine + H(+) = (8S)-8-amino-7-oxononanoate + holo-[ACP] + CO2. It participates in cofactor biosynthesis; biotin biosynthesis. Functionally, catalyzes the decarboxylative condensation of pimeloyl-[acyl-carrier protein] and L-alanine to produce 8-amino-7-oxononanoate (AON), [acyl-carrier protein], and carbon dioxide. This chain is 8-amino-7-oxononanoate synthase, found in Methylobacterium radiotolerans (strain ATCC 27329 / DSM 1819 / JCM 2831 / NBRC 15690 / NCIMB 10815 / 0-1).